Reading from the N-terminus, the 276-residue chain is Bis(5'-nucleosyl)-tetraphosphatase, symmetrical (276 aa).

The protein belongs to the Ap4A hydrolase family.

It carries out the reaction P(1),P(4)-bis(5'-adenosyl) tetraphosphate + H2O = 2 ADP + 2 H(+). Its function is as follows. Hydrolyzes diadenosine 5',5'''-P1,P4-tetraphosphate to yield ADP. This is Bis(5'-nucleosyl)-tetraphosphatase, symmetrical from Dechloromonas aromatica (strain RCB).